We begin with the raw amino-acid sequence, 329 residues long: Ketol-acid reductoisomerase (NADP(+)) (329 aa).

The KARI N-terminal Rossmann domain occupies 2–181; it reads VQKYYESDAD…GATRAVVFET (180 aa). Residues 25 to 28, arginine 48, serine 52, and 82 to 85 contribute to the NADP(+) site; these read YGSQ and DENQ. The active site involves histidine 107. Residue glycine 133 coordinates NADP(+). Residues 182-327 enclose the KARI C-terminal knotted domain; the sequence is TFAEETETDL…AEIRGFMPQF (146 aa). 4 residues coordinate Mg(2+): aspartate 190, glutamate 194, glutamate 226, and glutamate 230. Serine 251 provides a ligand contact to substrate.

Belongs to the ketol-acid reductoisomerase family. Mg(2+) is required as a cofactor.

The catalysed reaction is (2R)-2,3-dihydroxy-3-methylbutanoate + NADP(+) = (2S)-2-acetolactate + NADPH + H(+). It catalyses the reaction (2R,3R)-2,3-dihydroxy-3-methylpentanoate + NADP(+) = (S)-2-ethyl-2-hydroxy-3-oxobutanoate + NADPH + H(+). It functions in the pathway amino-acid biosynthesis; L-isoleucine biosynthesis; L-isoleucine from 2-oxobutanoate: step 2/4. Its pathway is amino-acid biosynthesis; L-valine biosynthesis; L-valine from pyruvate: step 2/4. Involved in the biosynthesis of branched-chain amino acids (BCAA). Catalyzes an alkyl-migration followed by a ketol-acid reduction of (S)-2-acetolactate (S2AL) to yield (R)-2,3-dihydroxy-isovalerate. In the isomerase reaction, S2AL is rearranged via a Mg-dependent methyl migration to produce 3-hydroxy-3-methyl-2-ketobutyrate (HMKB). In the reductase reaction, this 2-ketoacid undergoes a metal-dependent reduction by NADPH to yield (R)-2,3-dihydroxy-isovalerate. This is Ketol-acid reductoisomerase (NADP(+)) from Methanoculleus marisnigri (strain ATCC 35101 / DSM 1498 / JR1).